Consider the following 266-residue polypeptide: Proteasome subunit beta type-7 (266 aa).

Residues 1-33 (MNHDPFSWGRPADSTYGAYNTQIANAGASPMVN) constitute a propeptide that is removed on maturation.

Belongs to the peptidase T1B family. As to quaternary structure, the 26S proteasome consists of a 20S proteasome core and two 19S regulatory subunits. The 20S proteasome core is composed of 28 subunits that are arranged in four stacked rings, resulting in a barrel-shaped structure. The two end rings are each formed by seven alpha subunits, and the two central rings are each formed by seven beta subunits. The catalytic chamber with the active sites is on the inside of the barrel. Interacts with CIC1.

It localises to the cytoplasm. The protein resides in the nucleus. In terms of biological role, non-catalytic component of the proteasome which degrades poly-ubiquitinated proteins in the cytoplasm and in the nucleus. It is essential for the regulated turnover of proteins and for the removal of misfolded proteins. The proteasome is a multicatalytic proteinase complex that is characterized by its ability to cleave peptides with Arg, Phe, Tyr, Leu, and Glu adjacent to the leaving group at neutral or slightly basic pH. It has an ATP-dependent proteolytic activity. PRE3 and PRE4 are necessary for the peptidyl-glutamyl-peptide-hydrolyzing activity. In Saccharomyces cerevisiae (strain ATCC 204508 / S288c) (Baker's yeast), this protein is Proteasome subunit beta type-7 (PRE4).